The following is a 270-amino-acid chain: MRIALGIQYDGAAFCGWQAQPHGKTVQDRLEHALAEFARVPLHTTVAGRTDTGVHGLGQVVHFDTDLDREVFSWVRGTNAFLPSTVAVQWAKPMPETFHARFSAFERTYYYALYVHPVRSPMLAGRAGWIHTPLDDDAMRAAAAHLIGEHDFSSFRSSECQSKTPVKHLYQIDVRRVGHFVHFRFRANAFLHHMVRNLMGCLVAVGRGRYPADWLADVLAGRDRNLAAPTFMADGLYLAHVGYPAEFAVPPAQLGSVPWSSVWADLDPQS.

Asp51 acts as the Nucleophile in catalysis. Tyr109 contributes to the substrate binding site.

Belongs to the tRNA pseudouridine synthase TruA family. In terms of assembly, homodimer.

It carries out the reaction uridine(38/39/40) in tRNA = pseudouridine(38/39/40) in tRNA. Its function is as follows. Formation of pseudouridine at positions 38, 39 and 40 in the anticodon stem and loop of transfer RNAs. This is tRNA pseudouridine synthase A from Burkholderia lata (strain ATCC 17760 / DSM 23089 / LMG 22485 / NCIMB 9086 / R18194 / 383).